The chain runs to 151 residues: Internal scaffolding protein VP3 (151 aa).

Residues 120–151 form a disordered region; sequence VETPQQAPQSTTNQTTTKPAPASGEPTPVPTP. Residues 122-137 are compositionally biased toward polar residues; sequence TPQQAPQSTTNQTTTK.

This sequence belongs to the microvidae B protein family.

The protein resides in the host cytoplasm. In terms of biological role, participates in the assembly of the viral procapsid in the cytoplasm. Internal scaffolding protein VP3 is released from the procapsid upon genome packaging, possibly through affinity displacement by the protein VP8, or by proteolysis. The sequence is that of Internal scaffolding protein VP3 from Bdellovibrio bacteriovorus (Bacteriophage phiMH2K).